The sequence spans 225 residues: Ribonuclease HII (225 aa).

Residues 35 to 225 enclose the RNase H type-2 domain; sequence GLVAGVDEVG…SFRPCQISLD (191 aa). A divalent metal cation is bound by residues aspartate 41, glutamate 42, and aspartate 137.

It belongs to the RNase HII family. Mn(2+) is required as a cofactor. The cofactor is Mg(2+).

The protein localises to the cytoplasm. It catalyses the reaction Endonucleolytic cleavage to 5'-phosphomonoester.. In terms of biological role, endonuclease that specifically degrades the RNA of RNA-DNA hybrids. The protein is Ribonuclease HII of Trichormus variabilis (strain ATCC 29413 / PCC 7937) (Anabaena variabilis).